The following is a 537-amino-acid chain: Prolyl 4-hydroxylase subunit alpha-2 (537 aa).

The signal sequence occupies residues 1 to 23 (MKLQVLVLVLLMSWFGVLSWVQA). Residue N117 is glycosylated (N-linked (GlcNAc...) asparagine). Residues 209 to 242 (SLVLDYLSYAVFQLGDLHRAVELTRRLLSLDPSH) form a TPR repeat. Residue N266 is glycosylated (N-linked (GlcNAc...) asparagine). In terms of domain architecture, Fe2OG dioxygenase spans 414–522 (TAELLQVANY…KWVSNKWFHE (109 aa)). 2 residues coordinate Fe cation: H432 and D434. At K482 the chain carries N6-succinyllysine. Fe cation is bound at residue H503. K513 contacts 2-oxoglutarate.

The protein belongs to the P4HA family. In terms of assembly, heterotetramer of two alpha-2 chains and two beta chains (P4HB) (the beta chain is the multi-functional PDI), where P4HB plays the role of a structural subunit; this tetramer catalyzes the formation of 4-hydroxyproline in collagen. The cofactor is Fe(2+). L-ascorbate is required as a cofactor. Expressed at least in brain, heart and lung.

The protein resides in the endoplasmic reticulum lumen. The catalysed reaction is L-prolyl-[collagen] + 2-oxoglutarate + O2 = trans-4-hydroxy-L-prolyl-[collagen] + succinate + CO2. Inhibited by poly(L-proline) only at very high concentrations. Its function is as follows. Catalyzes the post-translational formation of 4-hydroxyproline in -Xaa-Pro-Gly- sequences in collagens and other proteins. The polypeptide is Prolyl 4-hydroxylase subunit alpha-2 (P4ha2) (Mus musculus (Mouse)).